A 258-amino-acid polypeptide reads, in one-letter code: F-box/SPRY domain-containing protein 1 (258 aa).

In terms of domain architecture, F-box spans 6-54 (TEYAPDIPDNVLELIFSYLKLQDLRNCALVCKSWHRFLSDENNEVWRAQ). In terms of domain architecture, B30.2/SPRY spans 64 to 256 (FKTDLLSVVP…ISMVYLGPPL (193 aa)).

The protein belongs to the FBXO45/Fsn family. Component of an E3 ubiquitin ligase complex composed of hiw and Fsn.

It localises to the synapse. The protein operates within protein modification; protein ubiquitination. Its function is as follows. Required in the presynaptic motoneuron to down-regulate the levels of wnd and restrain synaptic terminal growth at the neuromuscular junction (NMJ). The polypeptide is F-box/SPRY domain-containing protein 1 (Culex quinquefasciatus (Southern house mosquito)).